Here is a 311-residue protein sequence, read N- to C-terminus: Ornithine carbamoyltransferase (311 aa).

Carbamoyl phosphate-binding positions include 57–60 (STRT), Gln84, Arg108, and 135–138 (HPCQ). L-ornithine is bound by residues Asn166, Asp230, and 234 to 235 (SM). Carbamoyl phosphate contacts are provided by residues 270 to 271 (CL) and Arg298.

Belongs to the aspartate/ornithine carbamoyltransferase superfamily. OTCase family.

It localises to the cytoplasm. It carries out the reaction carbamoyl phosphate + L-ornithine = L-citrulline + phosphate + H(+). The protein operates within amino-acid biosynthesis; L-arginine biosynthesis; L-arginine from L-ornithine and carbamoyl phosphate: step 1/3. In terms of biological role, reversibly catalyzes the transfer of the carbamoyl group from carbamoyl phosphate (CP) to the N(epsilon) atom of ornithine (ORN) to produce L-citrulline. The polypeptide is Ornithine carbamoyltransferase (Carboxydothermus hydrogenoformans (strain ATCC BAA-161 / DSM 6008 / Z-2901)).